Consider the following 294-residue polypeptide: Mitochondrial glycine transporter (294 aa).

Solcar repeat units lie at residues 5–84 (RRAT…IRQA), 102–186 (LNMY…MKVL), and 208–292 (ASTL…IVKK). The next 6 membrane-spanning stretches (helical) occupy residues 11–36 (LIGG…TRLQ), 59–85 (GALP…RQAI), 108–133 (MFSG…VRYE), 161–184 (GFGA…DRMK), 212–238 (INGS…KTRM), and 267–285 (GISL…AWGI).

Belongs to the mitochondrial carrier (TC 2.A.29) family. SLC25A38 subfamily.

It is found in the mitochondrion inner membrane. It carries out the reaction glycine(in) = glycine(out). Its function is as follows. Mitochondrial glycine transporter that imports glycine into the mitochondrial matrix. Plays an important role in providing glycine for the first enzymatic step in heme biosynthesis, the condensation of glycine with succinyl-CoA to produce 5-aminolevulinate (ALA) in the mitochondrial matrix. The polypeptide is Mitochondrial glycine transporter (Kluyveromyces lactis (strain ATCC 8585 / CBS 2359 / DSM 70799 / NBRC 1267 / NRRL Y-1140 / WM37) (Yeast)).